The following is a 333-amino-acid chain: Biotin synthase (333 aa).

Positions 47 to 276 (FFKNQMEFCS…KSEIRLCGGR (230 aa)) constitute a Radical SAM core domain. [4Fe-4S] cluster contacts are provided by Cys-65, Cys-69, and Cys-72. Positions 109, 141, 201, and 271 each coordinate [2Fe-2S] cluster.

The protein belongs to the radical SAM superfamily. Biotin synthase family. As to quaternary structure, homodimer. It depends on [4Fe-4S] cluster as a cofactor. Requires [2Fe-2S] cluster as cofactor.

It carries out the reaction (4R,5S)-dethiobiotin + (sulfur carrier)-SH + 2 reduced [2Fe-2S]-[ferredoxin] + 2 S-adenosyl-L-methionine = (sulfur carrier)-H + biotin + 2 5'-deoxyadenosine + 2 L-methionine + 2 oxidized [2Fe-2S]-[ferredoxin]. It participates in cofactor biosynthesis; biotin biosynthesis; biotin from 7,8-diaminononanoate: step 2/2. Functionally, catalyzes the conversion of dethiobiotin (DTB) to biotin by the insertion of a sulfur atom into dethiobiotin via a radical-based mechanism. The sequence is that of Biotin synthase from Sulfurihydrogenibium sp. (strain YO3AOP1).